The chain runs to 221 residues: Iron-sulfur cluster repair protein YtfE (221 aa).

This sequence belongs to the RIC family. YtfE subfamily. In terms of assembly, homodimer.

It is found in the cytoplasm. Di-iron-containing protein involved in the repair of iron-sulfur clusters damaged by oxidative and nitrosative stress conditions. The chain is Iron-sulfur cluster repair protein YtfE from Dickeya chrysanthemi (strain Ech1591) (Dickeya zeae (strain Ech1591)).